The following is a 378-amino-acid chain: Alcohol dehydrogenase (378 aa).

Asp-195, His-199, His-262, and His-274 together coordinate Fe cation.

The protein belongs to the iron-containing alcohol dehydrogenase family. It depends on Fe(2+) as a cofactor. The cofactor is Mn(2+).

It catalyses the reaction a primary alcohol + NAD(+) = an aldehyde + NADH + H(+). The catalysed reaction is butan-1-ol + NAD(+) = butanal + NADH + H(+). It carries out the reaction hexan-1-ol + NAD(+) = hexanal + NADH + H(+). The enzyme catalyses ethanol + NAD(+) = acetaldehyde + NADH + H(+). In terms of biological role, thermostable type III alcohol dehydrogenase. For oxidation activity, the best substrates are 1-butanol and 1-hexanol, followed by ethanol. Shows lower activity with ethylene glycol, isopentanol, isopropanol and glycerol. Displays higher reduction activity in the presence of butanal, followed by acetaldehyde. Has lower activity with hexanal and acetone. The protein is Alcohol dehydrogenase of Thermococcus barophilus.